The following is a 345-amino-acid chain: Phosphoribosylformylglycinamidine cyclo-ligase (345 aa).

Belongs to the AIR synthase family.

It localises to the cytoplasm. It catalyses the reaction 2-formamido-N(1)-(5-O-phospho-beta-D-ribosyl)acetamidine + ATP = 5-amino-1-(5-phospho-beta-D-ribosyl)imidazole + ADP + phosphate + H(+). It functions in the pathway purine metabolism; IMP biosynthesis via de novo pathway; 5-amino-1-(5-phospho-D-ribosyl)imidazole from N(2)-formyl-N(1)-(5-phospho-D-ribosyl)glycinamide: step 2/2. The sequence is that of Phosphoribosylformylglycinamidine cyclo-ligase from Histophilus somni (strain 2336) (Haemophilus somnus).